The primary structure comprises 724 residues: Long-chain-fatty-acid--CoA ligase ACSBG1 (724 aa).

The disordered stretch occupies residues 1 to 51 (MPRNSGAGYGCPHGDPSMLDSRETPQESRQDMTVGTTQEKLKTSSLTDRQP). A compositionally biased stretch (basic and acidic residues) spans 20-30 (DSRETPQESRQ). Positions 31–51 (DMTVGTTQEKLKTSSLTDRQP) are enriched in polar residues. 2 positions are modified to phosphoserine: S53 and S56. ATP contacts are provided by residues 282–290 (TSGTTGNPK), 472–477 (AGYGLS), D550, and R565. A Phosphotyrosine modification is found at Y658. An ATP-binding site is contributed by K701.

The protein belongs to the ATP-dependent AMP-binding enzyme family. Bubblegum subfamily.

Its subcellular location is the cytoplasm. It is found in the cytoplasmic vesicle. The protein localises to the microsome. It localises to the endoplasmic reticulum. The protein resides in the cell membrane. The enzyme catalyses a long-chain fatty acid + ATP + CoA = a long-chain fatty acyl-CoA + AMP + diphosphate. The catalysed reaction is (E)-hexadec-2-enoate + ATP + CoA = (2E)-hexadecenoyl-CoA + AMP + diphosphate. It carries out the reaction hexadecanoate + ATP + CoA = hexadecanoyl-CoA + AMP + diphosphate. Functionally, catalyzes the conversion of fatty acids such as long-chain and very long-chain fatty acids to their active form acyl-CoAs for both synthesis of cellular lipids, and degradation via beta-oxidation. Can activate diverse saturated, monosaturated and polyunsaturated fatty acids. The chain is Long-chain-fatty-acid--CoA ligase ACSBG1 from Macaca fascicularis (Crab-eating macaque).